Reading from the N-terminus, the 256-residue chain is Major prion protein (256 aa).

Positions 1-24 are cleaved as a signal peptide; that stretch reads MVKSHIGSWILVLFVAMWSDVGLC. An interaction with ADGRG6 region spans residues 25–41; it reads KKRPKPGGGWNTGGSRY. The segment at 25–233 is interaction with GRB2, ERI3 and SYN1; sequence KKRPKPGGGW…ESEAYYQRRA (209 aa). Residues 28–110 form a disordered region; the sequence is PKPGGGWNTG…QWNKPSKPKT (83 aa). Tandem repeats lie at residues 54-62, 63-70, 71-78, 79-86, and 87-95. Positions 54 to 95 are 5 X 8 AA tandem repeats of P-H-G-G-G-W-G-Q; that stretch reads PQGGGGWGQPHGGGWGQPHGGGWGQPHGGGWGQPHGGGGWGQ. Gly residues predominate over residues 55-97; that stretch reads QGGGGWGQPHGGGWGQPHGGGWGQPHGGGWGQPHGGGGWGQGG. 12 residues coordinate Cu(2+): His-64, Gly-65, Gly-66, His-72, Gly-73, Gly-74, His-80, Gly-81, Gly-82, His-88, Gly-90, and Gly-91. Cys-182 and Cys-217 are disulfide-bonded. N-linked (GlcNAc...) asparagine glycosylation is found at Asn-184 and Asn-200. A lipid anchor (GPI-anchor amidated alanine) is attached at Ala-233. A propeptide spans 234–256 (removed in mature form); that stretch reads SAILFSSPPVILLISFLIFLIVG.

The protein belongs to the prion family. In terms of assembly, monomer and homodimer. Has a tendency to aggregate into amyloid fibrils containing a cross-beta spine, formed by a steric zipper of superposed beta-strands. Soluble oligomers may represent an intermediate stage on the path to fibril formation. Copper binding may promote oligomerization. Interacts with GRB2, APP, ERI3/PRNPIP and SYN1. Mislocalized cytosolically exposed PrP interacts with MGRN1; this interaction alters MGRN1 subcellular location and causes lysosomal enlargement. Interacts with APP. Interacts with KIAA1191. Interacts with ADGRG6.

Its subcellular location is the cell membrane. It localises to the golgi apparatus. Its function is as follows. Its primary physiological function is unclear. May play a role in neuronal development and synaptic plasticity. May be required for neuronal myelin sheath maintenance. May promote myelin homeostasis through acting as an agonist for ADGRG6 receptor. May play a role in iron uptake and iron homeostasis. Soluble oligomers are toxic to cultured neuroblastoma cells and induce apoptosis (in vitro). Association with GPC1 (via its heparan sulfate chains) targets PRNP to lipid rafts. Also provides Cu(2+) or Zn(2+) for the ascorbate-mediated GPC1 deaminase degradation of its heparan sulfate side chains. This Felis catus (Cat) protein is Major prion protein (PRNP).